Here is a 579-residue protein sequence, read N- to C-terminus: MTQQRRILITSALPYINGVKHLGNLAGSMLPADVYARVMRLQGHDVTYICATDEHGTPAELAAQATGQSVQAYCDEQYEVQRKAGEGFNLSFDWFGRTSRPANHTLTQHLAQQLEKNGLIEVRTSKQVYAVDDGRFLPDRYVEGTCPHCGYEKARGDQCDNCGRLLDPVDLINPYSAVSGSRNIEIRDTDHLYLLQTGMQDRIRDWVNAKGKNWPSLAVSIANKWLDEGLIARSISRDLSWGVKVTDADGNPRPGFENKVFYVWFDAPIGYISATQEWAEATGNDWEKLWLTDKGADQTEYVQFMGKDNVAFHTVSFPVTLLGSGEPWKTVDKLKAFNWVTWYGGKFSTSQKRGVFMDQALSLLPSDYWRWYLISNAPEGSDAAFTWEGFQAAVNSDLANVLGNFINRITKYCASKFEGKIPETGTSGDAEAWMANELAERLPRLIEFYEAMEFRKAAAETRAIWAAGNEYLTKAEPWVKYKNDVDGAAVGVRAGINLAAIFGIIAQPIIPDAAKKILDALGIPEENRKMPAGSKPEDFAALLDAIPRGHAISPPDVLFQKIEDSQVEEWTAQFGGGKE.

A 'HIGH' region motif is present at residues 14 to 24 (PYINGVKHLGN). Residues C146, C149, C159, and C162 each coordinate Zn(2+). A 'KMSKS' region motif is present at residues 346-350 (KFSTS). T349 contributes to the ATP binding site.

It belongs to the class-I aminoacyl-tRNA synthetase family. MetG type 1 subfamily. Monomer. Zn(2+) serves as cofactor.

The protein localises to the cytoplasm. It catalyses the reaction tRNA(Met) + L-methionine + ATP = L-methionyl-tRNA(Met) + AMP + diphosphate. Functionally, is required not only for elongation of protein synthesis but also for the initiation of all mRNA translation through initiator tRNA(fMet) aminoacylation. This Hyphomonas neptunium (strain ATCC 15444) protein is Methionine--tRNA ligase.